Reading from the N-terminus, the 223-residue chain is MOB-like protein phocein (223 aa).

Cys-92, Cys-97, Cys-110, His-113, Cys-119, His-127, His-169, and His-174 together coordinate Zn(2+).

Belongs to the MOB1/phocein family. Part of the core of STRIPAK complexes composed of PP2A catalytic and scaffolding subunits, the striatins (PP2A regulatory subunits), the striatin-associated proteins MOB4, STRIP1 and STRIP2, PDCD10 and members of the STE20 kinases, such as STK24 and STK26.

The protein localises to the cytoplasm. The protein resides in the membrane. It is found in the golgi apparatus. It localises to the golgi stack membrane. Part of the striatin-interacting phosphatase and kinase (STRIPAK) complexes. STRIPAK complexes have critical roles in protein (de)phosphorylation and are regulators of multiple signaling pathways including Hippo, MAPK, nuclear receptor and cytoskeleton remodeling. Different types of STRIPAK complexes are involved in a variety of biological processes such as cell growth, differentiation, apoptosis, metabolism and immune regulation. The protein is MOB-like protein phocein (MOB4) of Gallus gallus (Chicken).